A 556-amino-acid chain; its full sequence is Endoglucanase 22 (556 aa).

A signal peptide spans 1–33 (MSRGRARLQPPPPGTRTTTLAAVLVLVLLAVVA). Aspartate 108 functions as the Nucleophile in the catalytic mechanism. Catalysis depends on residues histidine 450, aspartate 502, and glutamate 511.

Belongs to the glycosyl hydrolase 9 (cellulase E) family.

The protein resides in the secreted. It catalyses the reaction Endohydrolysis of (1-&gt;4)-beta-D-glucosidic linkages in cellulose, lichenin and cereal beta-D-glucans.. This is Endoglucanase 22 (GLU11) from Oryza sativa subsp. japonica (Rice).